Consider the following 313-residue polypeptide: Ribosomal RNA small subunit methyltransferase H (313 aa).

Residues 33-35, Asp-53, Phe-80, Asp-102, and Gln-109 each bind S-adenosyl-L-methionine; that span reads GGH. The segment at 291–313 is disordered; it reads SDEEMRANPRAQSAKLRAAEKIR.

Belongs to the methyltransferase superfamily. RsmH family.

The protein resides in the cytoplasm. The catalysed reaction is cytidine(1402) in 16S rRNA + S-adenosyl-L-methionine = N(4)-methylcytidine(1402) in 16S rRNA + S-adenosyl-L-homocysteine + H(+). Functionally, specifically methylates the N4 position of cytidine in position 1402 (C1402) of 16S rRNA. This chain is Ribosomal RNA small subunit methyltransferase H, found in Heliobacterium modesticaldum (strain ATCC 51547 / Ice1).